The following is a 406-amino-acid chain: MTIRHILAIRKKSLELPSDLKTFLRVLANCQHLKKNKKCRRTIFSVDFQNNQRQKPSNFHFWTVIKKFSKKILKSFIIKFGNNGTIAVVFSIFPTGATPSLTFLFQALGKGAYGNVYRVRSLHDGKDYALKQIMISSKNEGIPQSVLREITVMKHLARKAHPNIISLKSVFHQLDPVRAILKINMIMERCDWDLHTFLRNIPRGVPEQQAKHVTAQIVRALDFLHTHSIIHRDLKPQNILLNRDQTVKLADFGLSKEYSNTTAFTTLVVTLWYRSPEVLLQSYYNSTVDMWALGCIVSEIYCRQPLFVGQNEAEQLTDIFKKMGTPVGKDWPSESVIARDSFPQYRPTNLKDLSPQMSKQAIEFVQQCLRYDHSKRLSARGALSHPFLKPAVATKSRVLKQINFNK.

The Protein kinase domain occupies 102–388 (TFLFQALGKG…ARGALSHPFL (287 aa)). Residues 108–116 (LGKGAYGNV) and Lys131 each bind ATP. Catalysis depends on Asp233, which acts as the Proton acceptor. Mg(2+) is bound by residues Asn238 and Asp251.

This sequence belongs to the protein kinase superfamily. CMGC Ser/Thr protein kinase family. CDC2/CDKX subfamily. In terms of assembly, interacts with cyd-1; the interaction is likely involved in regulating cdk-4 activity. Mg(2+) serves as cofactor.

The enzyme catalyses L-seryl-[protein] + ATP = O-phospho-L-seryl-[protein] + ADP + H(+). It carries out the reaction L-threonyl-[protein] + ATP = O-phospho-L-threonyl-[protein] + ADP + H(+). Serine/threonine-protein kinase which, in association with cyclin D-like protein cyd-1, is required for the progression through the G1 phase of the cell cycle during postembryonic development by phosphorylating and inhibiting lin-35 and fzr-1. In complex with cyd-1, involved in sex determination during gonadogenesis by regulating the asymmetric division of the somatic gonadal precursor cell (SGP). The protein is Cyclin-dependent kinase 4 homolog of Caenorhabditis elegans.